Consider the following 271-residue polypeptide: Formamidopyrimidine-DNA glycosylase (271 aa).

Residue Pro2 is the Schiff-base intermediate with DNA of the active site. Glu3 (proton donor) is an active-site residue. Catalysis depends on Lys57, which acts as the Proton donor; for beta-elimination activity. The DNA site is built by His90, Arg109, and Lys151. The FPG-type zinc finger occupies 236 to 270 (HVYGRGGETCTQCGNLLSEIRLGQRTTVFCGICQT). Arg260 functions as the Proton donor; for delta-elimination activity in the catalytic mechanism.

The protein belongs to the FPG family. As to quaternary structure, monomer. Requires Zn(2+) as cofactor.

The enzyme catalyses Hydrolysis of DNA containing ring-opened 7-methylguanine residues, releasing 2,6-diamino-4-hydroxy-5-(N-methyl)formamidopyrimidine.. It carries out the reaction 2'-deoxyribonucleotide-(2'-deoxyribose 5'-phosphate)-2'-deoxyribonucleotide-DNA = a 3'-end 2'-deoxyribonucleotide-(2,3-dehydro-2,3-deoxyribose 5'-phosphate)-DNA + a 5'-end 5'-phospho-2'-deoxyribonucleoside-DNA + H(+). In terms of biological role, involved in base excision repair of DNA damaged by oxidation or by mutagenic agents. Acts as a DNA glycosylase that recognizes and removes damaged bases. Has a preference for oxidized purines, such as 7,8-dihydro-8-oxoguanine (8-oxoG). Has AP (apurinic/apyrimidinic) lyase activity and introduces nicks in the DNA strand. Cleaves the DNA backbone by beta-delta elimination to generate a single-strand break at the site of the removed base with both 3'- and 5'-phosphates. The chain is Formamidopyrimidine-DNA glycosylase from Shewanella sp. (strain MR-7).